Here is a 2179-residue protein sequence, read N- to C-terminus: Voltage-dependent L-type calcium channel subunit alpha-1D (2179 aa).

Disordered stretches follow at residues 1-21, 30-49, and 64-100; these read MMMM…EDHA, TRLP…SKQT, and KAAQ…SSNS. The Cytoplasmic portion of the chain corresponds to 1 to 126; the sequence is MMMMMMMKKM…RACISIVEWK (126 aa). The span at 38–49 shows a compositional bias: polar residues; sequence GPTSQPNSSKQT. Residues 82–93 are compositionally biased toward basic residues; the sequence is QRKRQQYAKSKK. One copy of the I repeat lies at 113–409; sequence NPIRRACISI…LVLGVLSGEF (297 aa). Residues 127 to 145 form a helical membrane-spanning segment; it reads PFDIFILLAIFANCVALAI. Over 146-163 the chain is Extracellular; the sequence is YIPFPEDDSNSTNHNLEK. The chain crosses the membrane as a helical span at residues 164–183; that stretch reads VEYAFLIIFTVETFLKIIAY. At 184 to 195 the chain is on the cytoplasmic side; that stretch reads GLLLHPNAYVRN. The helical transmembrane segment at 196 to 214 threads the bilayer; sequence GWNLLDFVIVIVGLFSVIL. Over 215-235 the chain is Extracellular; sequence EQLTKETEGGNHSSGKSGGFD. A helical membrane pass occupies residues 236-254; it reads VKALRAFRVLRPLRLVSGV. The Cytoplasmic segment spans residues 255-273; it reads PSLQVVLNSIIKAMVPLLH. Residues 274-293 form a helical membrane-spanning segment; that stretch reads IALLVLFVIIIYAIIGLELF. Residues 294-381 are Extracellular-facing; that stretch reads IGKMHKTCFF…WVNDAIGWEW (88 aa). A Ca(2+)-binding site is contributed by glutamate 364. A helical membrane pass occupies residues 382-406; sequence PWVYFVSLIILGSFFVLNLVLGVLS. Topologically, residues 407-543 are cytoplasmic; the sequence is GEFSKEREKA…RRCRAAVKSV (137 aa). Residues 429 to 446 are binding to the beta subunit; sequence QQLEEDLKGYLDWITQAE. The interval 449–480 is disordered; it reads DPENEEEGGEEGKRNTSMPTSETESVNTENVS. A compositionally biased stretch (polar residues) spans 463 to 479; that stretch reads NTSMPTSETESVNTENV. One copy of the II repeat lies at 529–775; that stretch reads NRFNRRRCRA…VFLAIAVDNL (247 aa). A helical transmembrane segment spans residues 544–563; sequence TFYWLVIVLVFLNTLTISSE. The Extracellular portion of the chain corresponds to 564–578; sequence HYNQPDWLTQIQDIA. The chain crosses the membrane as a helical span at residues 579–597; the sequence is NKVLLALFTCEMLVKMYSL. At 598 to 605 the chain is on the cytoplasmic side; that stretch reads GLQAYFVS. The chain crosses the membrane as a helical span at residues 606-624; the sequence is LFNRFDCFVVCGGITETIL. The Extracellular segment spans residues 625 to 634; the sequence is VELELMSPLG. The chain crosses the membrane as a helical span at residues 635 to 653; the sequence is VSVFRCVRLLRIFKVTRHW. Residues 654–672 lie on the Cytoplasmic side of the membrane; it reads TSLSNLVASLLNSMKSIAS. A helical transmembrane segment spans residues 673-693; that stretch reads LLLLLFLFIIIFSLLGMQLFG. Topologically, residues 694-747 are extracellular; it reads GKFNFDETQTKRSTFDNFPQALLTVFQILTGEDWNAVMYDGIMAYGGPSSSGMI. Position 725 (glutamate 725) interacts with Ca(2+). A helical transmembrane segment spans residues 748-772; that stretch reads VCIYFIILFICGNYILLNVFLAIAV. Residues 771–810 adopt a coiled-coil conformation; that stretch reads AVDNLADAESLNTAQKEEAEEKERKKIARKESLENKKNNK. Topologically, residues 773–906 are cytoplasmic; the sequence is DNLADAESLN…VGCHKLINHH (134 aa). Residues 786-810 are compositionally biased toward basic and acidic residues; the sequence is KEEAEEKERKKIARKESLENKKNNK. The interval 786-870 is disordered; that stretch reads KEEAEEKERK…AGPRPRRISE (85 aa). Over residues 811-822 the composition is skewed to polar residues; sequence PEVNQIANSDNK. The span at 845 to 858 shows a compositional bias: acidic residues; the sequence is VGEEEEEEEEDEPE. Residues 893-1175 form an III repeat; sequence NPIRVGCHKL…IFVGFVIVTF (283 aa). A helical transmembrane segment spans residues 907–925; that stretch reads IFTNLILVFIMLSSAALAA. The Extracellular segment spans residues 926 to 941; the sequence is EDPIRSHSFRNTILGY. Residues 942 to 961 form a helical membrane-spanning segment; sequence FDYAFTAIFTVEILLKMTTF. The Cytoplasmic portion of the chain corresponds to 962–973; sequence GAFLHKGAFCRN. A helical membrane pass occupies residues 974 to 992; sequence YFNLLDMLVVGVSLVSFGI. Residues 993–998 lie on the Extracellular side of the membrane; sequence QSSAIS. The helical transmembrane segment at 999–1018 threads the bilayer; that stretch reads VVKILRVLRVLRPLRAINRA. Topologically, residues 1019 to 1037 are cytoplasmic; the sequence is KGLKHVVQCVFVAIRTIGN. The helical transmembrane segment at 1038-1057 threads the bilayer; that stretch reads IMIVTTLLQFMFACIGVQLF. Topologically, residues 1058-1147 are extracellular; the sequence is KGKFYRCTDE…VGPVYNYRVE (90 aa). The tract at residues 1095-1185 is dihydropyridine binding; that stretch reads RIWQNSDFNF…QEQGEKEYKN (91 aa). Glutamate 1121 is a Ca(2+) binding site. The helical transmembrane segment at 1148 to 1168 threads the bilayer; sequence ISIFFIIYIIIVAFFMMNIFV. The Cytoplasmic segment spans residues 1169–1225; sequence GFVIVTFQEQGEKEYKNCELDKNQRQCVEYALKARPLRRYIPKNPYQYKFWYVVNSS. One copy of the IV repeat lies at 1212–1487; that stretch reads NPYQYKFWYV…LFVAVIMDNF (276 aa). The helical transmembrane segment at 1226-1244 threads the bilayer; the sequence is PFEYMMFVLIMLNTLCLAM. Topologically, residues 1245–1259 are extracellular; it reads QHYEQSKMFNDAMDI. Residues 1260–1279 traverse the membrane as a helical segment; that stretch reads LNMVFTGVFTVEMVLKVIAF. Residues 1280 to 1286 lie on the Cytoplasmic side of the membrane; it reads KPKGYFS. The chain crosses the membrane as a helical span at residues 1287–1308; that stretch reads DAWNTFDSLIVIGSIIDVALSE. The Extracellular portion of the chain corresponds to 1309–1333; the sequence is ADPSESETIPLPTATPGNSEESNRI. Residues 1334-1353 form a helical membrane-spanning segment; it reads SITFFRLFRVMRLVKLLSRG. The Cytoplasmic segment spans residues 1354-1372; that stretch reads EGIRTLLWTFIKSFQALPY. The helical transmembrane segment at 1373 to 1392 threads the bilayer; sequence VALLIAMLFFIYAVIGMQMF. Residues 1393 to 1459 lie on the Extracellular side of the membrane; that stretch reads GKVAMRDNNQ…GEEYTCGSNF (67 aa). Residues 1440-1506 form a dihydropyridine binding region; that stretch reads LCDPDSDYNP…LGPHHLDEFK (67 aa). The interval 1452-1495 is phenylalkylamine binding; sequence EYTCGSNFAIVYFISFYMLCAFLIINLFVAVIMDNFDYLTRDWS. Residues 1460 to 1484 traverse the membrane as a helical segment; the sequence is AIVYFISFYMLCAFLIINLFVAVIM. The Cytoplasmic segment spans residues 1485 to 2179; it reads DNFDYLTRDW…ADEMICITTL (695 aa). Disordered stretches follow at residues 1704-1789, 1896-1941, and 2135-2171; these read LLGN…AHGK, FERP…RSSF, and GDMG…DLAD. Residues 1764–1782 are compositionally biased toward polar residues; sequence SIGKQAPTSTNANLNNANM. Over residues 2156–2171 the composition is skewed to acidic residues; the sequence is SDEEPDPGREEEDLAD.

This sequence belongs to the calcium channel alpha-1 subunit (TC 1.A.1.11) family. CACNA1D subfamily. In terms of assembly, voltage-dependent calcium channels are multisubunit complexes, consisting of alpha-1, alpha-2, beta and delta subunits in a 1:1:1:1 ratio. The channel activity is directed by the pore-forming and voltage-sensitive alpha-1 subunit. In many cases, this subunit is sufficient to generate voltage-sensitive calcium channel activity. The auxiliary subunits beta and alpha-2/delta linked by a disulfide bridge regulate the channel activity. Interacts (via IQ domain) with CABP1 and CABP4 in a calcium independent manner. Interacts with RIMBP2. As to expression, expressed in the inner hair cells (IHC) of the cochlea.

The protein localises to the membrane. It catalyses the reaction Ca(2+)(in) = Ca(2+)(out). Its function is as follows. Voltage-sensitive calcium channels (VSCC) mediate the entry of calcium ions into excitable cells and are also involved in a variety of calcium-dependent processes, including muscle contraction, hormone or neurotransmitter release, gene expression, cell motility, cell division and cell death. The isoform alpha-1D gives rise to L-type calcium currents. Long-lasting (L-type) calcium channels belong to the 'high-voltage activated' (HVA) group. They are blocked by dihydropyridines (DHP), phenylalkylamines, and by benzothiazepines. In Mus musculus (Mouse), this protein is Voltage-dependent L-type calcium channel subunit alpha-1D (Cacna1d).